We begin with the raw amino-acid sequence, 564 residues long: Isopullulanase (564 aa).

Positions 1-19 are cleaved as a signal peptide; sequence MRSTGYLLTLSAAFQVAQA. Residues asparagine 24, asparagine 94, asparagine 115, asparagine 138, asparagine 186, asparagine 210, asparagine 305, asparagine 381, asparagine 448, asparagine 455, asparagine 460, asparagine 486, asparagine 491, asparagine 503, and asparagine 535 are each glycosylated (N-linked (GlcNAc...) asparagine).

In terms of processing, N-glycosylated.

The protein resides in the secreted. The enzyme catalyses Hydrolysis of pullulan to isopanose (6-alpha-maltosylglucose).. Its function is as follows. Hydrolyzes pullulan, a linear polymer which is composed of maltotriose units with alpha-1,6 glucosidic linkages, to produce isopanose (Glca1-4Glca1-6Glc). In Aspergillus niger, this protein is Isopullulanase (ipuA).